The chain runs to 551 residues: Arginine--tRNA ligase (551 aa).

Positions 125–135 (ANPTGPLHIGH) match the 'HIGH' region motif.

This sequence belongs to the class-I aminoacyl-tRNA synthetase family. As to quaternary structure, monomer.

The protein localises to the cytoplasm. It catalyses the reaction tRNA(Arg) + L-arginine + ATP = L-arginyl-tRNA(Arg) + AMP + diphosphate. This is Arginine--tRNA ligase from Oleidesulfovibrio alaskensis (strain ATCC BAA-1058 / DSM 17464 / G20) (Desulfovibrio alaskensis).